The primary structure comprises 8515 residues: Nonribosomal peptide synthetase 8 (8515 aa).

2 adenylation regions span residues 59–736 and 1163–1705; these read REHH…YRCS and AKLS…EWVE. A condensation 1 region spans residues 587–1159; it reads RRVVQWLENL…TVGEVALVGD (573 aa). The Carrier 1 domain maps to 615–691; it reads EPETAMERRL…ELAPRVKVAE (77 aa). Residue S652 is modified to O-(pantetheine 4'-phosphoryl)serine. The Carrier 2 domain maps to 1732–1808; it reads RGLTPTETVI…KLGRHADHSS (77 aa). The residue at position 1769 (S1769) is an O-(pantetheine 4'-phosphoryl)serine. The segment at 1830–2273 is epimerase 1; sequence LSPIQQWFFE…TLYDCPLAAL (444 aa). The segment at 2301-2709 is condensation 2; the sequence is SHIQEGILLS…RSPEAVLHDL (409 aa). The adenylation 3 stretch occupies residues 2733–3266; it reads QCLHWLIEQW…RMILSWLSEP (534 aa). One can recognise a Carrier 3 domain in the interval 3286–3362; it reads TTLGPVEKQM…KVTPRTISLS (77 aa). The residue at position 3323 (S3323) is an O-(pantetheine 4'-phosphoryl)serine. The segment at 3406–3819 is condensation 3; that stretch reads SPMQEGILLA…DNSGCSVKTV (414 aa). In terms of domain architecture, Carrier 4 spans 3857–3933; it reads EPTNLIALTV…EVFEHARFSD (77 aa). S3894 bears the O-(pantetheine 4'-phosphoryl)serine mark. The tract at residues 3953–4392 is epimerase 2; that stretch reads LSPIQKLHFH…TPSDFQLLSL (440 aa). The interval 4420–4823 is condensation 4; the sequence is PCSPMQEGIL…ARPRARLGTI (404 aa). The tract at residues 4837–5363 is adenylation 4; sequence WNEQARRPVV…RKVNKWLESF (527 aa). Residues 5385–5461 enclose the Carrier 5 domain; the sequence is PPLTPIQQTI…SLAACATAII (77 aa). Position 5422 is an O-(pantetheine 4'-phosphoryl)serine (S5422). The condensation 5 stretch occupies residues 5508 to 5923; the sequence is SPMQEGILFS…SLVDHLSLCS (416 aa). The tract at residues 5941–6459 is adenylation 5; sequence ELRQCLHELI…GKVDRQALRR (519 aa). A Carrier 6 domain is found at 6482-6558; it reads PISTAEEQQM…DLATLLESPA (77 aa). Residue S6519 is modified to O-(pantetheine 4'-phosphoryl)serine. The tract at residues 6606–6992 is condensation 6; sequence CTPLQESLMA…SQMKSVMGTL (387 aa). The segment at 7030-7544 is adenylation 6; the sequence is VEDLIISRAQ…SSGKLARKGV (515 aa). A Carrier 7 domain is found at 7575–7651; sequence IASSSVERAI…HLASREDLTA (77 aa). O-(pantetheine 4'-phosphoryl)serine is present on S7612. An epimerase 3 region spans residues 7670 to 8119; sequence LTPIQRFFFC…DYPRARLDYT (450 aa). Positions 8164 to 8504 are condensation 7; sequence HFIWKIAGTK…DPTSPLQFAD (341 aa). A compositionally biased stretch (polar residues) spans 8488 to 8500; the sequence is AVNSVSSDPTSPL. A disordered region spans residues 8488-8515; it reads AVNSVSSDPTSPLQFADGQDPMPVSHQP.

It belongs to the NRP synthetase family.

Nonribosomal peptide synthesis (NRPS) is a key mechanism responsible for the biosynthesis of bioactive metabolites which are potentially contributing to organismal virulence. However, contarary to other nonribosomal peptide synthases, NRPS8 does not encode a secreted peptide, but has more a structural role since it is involved in germ tube formation. This chain is Nonribosomal peptide synthetase 8 (NRPS8), found in Aspergillus fumigatus (strain ATCC MYA-4609 / CBS 101355 / FGSC A1100 / Af293) (Neosartorya fumigata).